Here is a 286-residue protein sequence, read N- to C-terminus: CBY1-interacting BAR domain-containing protein 1 (286 aa).

The N-terminal 47 residues, 1-47, are a transit peptide targeting the mitochondrion; it reads MLRRNLDERDAQTKQLQDAVTNVEKHFGELCQIFAAYVRKTARLRDK. Residues 10–220 form a BAR-like region; that stretch reads DAQTKQLQDA…NIDEDEDLEV (211 aa). Residues 107 to 178 are a coiled coil; sequence KMKRDDLKAT…IDNFEKQKIK (72 aa). The segment at 258 to 286 is disordered; it reads GQISTCRTRKDQQVEDEDDEELDVTEDEN. The span at 271–286 shows a compositional bias: acidic residues; it reads VEDEDDEELDVTEDEN.

Belongs to the CIBAR family. In terms of assembly, homodimer (via BAR-like domain). Heterodimer with FAM92B (via BAR-like domains). Interacts (via BAR-like domain) with CBY1; this interaction is required for targeting FAM92A to centriole and cilium basal body. Interacts (via BAR-like domain) with CBY3; both proteins form a ninefold symmetric structure at the flagellar base; are recruited to the annulus in a mutually dependent manner and regulate annulus positionning. As to expression, expressed in the heart, liver, spleen, lung, kidney, brain and muscle (at protein level). Strongly expressed throughout the developing limb bud, including the progress zone and the apical ectodermal ridge.

It is found in the cytoplasm. The protein resides in the cytoskeleton. It localises to the microtubule organizing center. The protein localises to the centrosome. Its subcellular location is the centriole. It is found in the cilium basal body. The protein resides in the cell projection. It localises to the cilium. The protein localises to the nucleus. Its subcellular location is the mitochondrion inner membrane. It is found in the flagellum. In terms of biological role, plays a critical role in regulating mitochondrial ultrastructure and function by maintaining the integrity of mitochondrial morphology, particularly the organization of cristae. Preferentially binds to negatively charged phospholipids like cardiolipin and phosphatidylinositol 4,5-bisphosphate enhancing its interaction with mitochondrial membranes. Induces membrane curvature and tubulation, which are critical for maintaining mitochondrial ultrastructure and the organization of cristae. Plays a crucial role in ciliogenesis. May play a role in limb development through its role in ciliogenesis. Plays a key role in the correct positioning of the annulus, a septin-based ring structure in the sperm flagellum, serving both as a physical barrier and a membrane diffusion barrier that separates the midpiece (MP) from the principal piece (PP). This positioning is essential for proper sperm motility and function. Interacts with CBY3 to form a complex which localizes to the curved membrane region of the flagellar pocket. By doing so, may provide stability and rigidity to the periannular membrane to prevent membrane deformation. This function is crucial for halting annulus migration at the proximal end of the fibrous sheath-containing PP. In Mus musculus (Mouse), this protein is CBY1-interacting BAR domain-containing protein 1.